The sequence spans 712 residues: Elongation factor G (712 aa).

Residues 8–290 form the tr-type G domain; sequence TRYRNIGISA…AVIEFLPSPT (283 aa). GTP is bound by residues 17-24, 88-92, and 142-145; these read AHIDAGKT, DTPGH, and NKMD.

Belongs to the TRAFAC class translation factor GTPase superfamily. Classic translation factor GTPase family. EF-G/EF-2 subfamily.

It localises to the cytoplasm. Catalyzes the GTP-dependent ribosomal translocation step during translation elongation. During this step, the ribosome changes from the pre-translocational (PRE) to the post-translocational (POST) state as the newly formed A-site-bound peptidyl-tRNA and P-site-bound deacylated tRNA move to the P and E sites, respectively. Catalyzes the coordinated movement of the two tRNA molecules, the mRNA and conformational changes in the ribosome. This is Elongation factor G from Acinetobacter baumannii (strain SDF).